Consider the following 795-residue polypeptide: MKFSELWLREWVNPAVDSETLSEQITMAGLEVDGVEPVAGAFHGVVVGEVVECGQHPNADKLRVTKVNVGGERLLDIVCGAPNCRQGLKVAVATVGAVLPGDFKIKAAKLRGEPSEGMLCSFSELGISDDHDGIIELPADAPIGTDIRDYLKLDDNAIEISVTPNRADCLGIIGVARDVAVLNQLALNEPTIEPVAATIQDTFPIQVEAPQACPRYLGRVVKGINVKAATPLWMREKLRRCGIRSIDPVVDVTNYVLLELGQPMHAFDLDRLNGSIIVRMAEEGETLTLLDGNEVKLNADTLVIADQQNALAMGGIFGGEHSGVNEETQNVLLECAYFNPLSITGRARRHGLHTDASHRYERGVDPALQHKAIERATRLLIDICGGEAGPVVDITSDADLPTRATITLRREKLDRLIGHVIADEQVSDILQRLGCNVVKTDAGWQATAPSWRFDMEIEEDLVEEVARIYGYNNIPNIPTQAPLIMTSHREASLALKRVKTLLVDHGYQEAITYSFVDPKIQGLIHPNEASLSLPSPISVEMSVMRLSLWSGLLSAAVYNQNRQQSRLRLFESGLRFVPDASADLGIRQDLMLSGVITGTRYEEHWDLARQAVDFYDLKGDLEAVLALTGKLSEVEFKAENNPALHPGQSAAIYLCGERIGFIGVIHPELERKLDLNGRTVVFELLWDKVADRVLPDANEISRFPANRRDIAVVVAENVPAGDILAECKKVGANQLVGVNLFDVYRGKGVAEGYKSLAISLTLQDTTRTLAEEEIAATVAECVAALKQRFQASLRD.

One can recognise a tRNA-binding domain in the interval 39–148; the sequence is AGAFHGVVVG…ADAPIGTDIR (110 aa). The B5 domain maps to 401 to 476; it reads PTRATITLRR…RIYGYNNIPN (76 aa). Positions 454, 460, 463, and 464 each coordinate Mg(2+). The FDX-ACB domain maps to 701 to 794; it reads SRFPANRRDI…LKQRFQASLR (94 aa).

The protein belongs to the phenylalanyl-tRNA synthetase beta subunit family. Type 1 subfamily. In terms of assembly, tetramer of two alpha and two beta subunits. The cofactor is Mg(2+).

The protein resides in the cytoplasm. It catalyses the reaction tRNA(Phe) + L-phenylalanine + ATP = L-phenylalanyl-tRNA(Phe) + AMP + diphosphate + H(+). In Pectobacterium atrosepticum (strain SCRI 1043 / ATCC BAA-672) (Erwinia carotovora subsp. atroseptica), this protein is Phenylalanine--tRNA ligase beta subunit.